The chain runs to 376 residues: E3 ubiquitin-protein ligase RNF34 (376 aa).

The segment at 56-107 (EGPNIVCKACGLSFSVFRKKHVCCDCKKDFCSLCSVSQENLRRCSTCHLLQE) adopts an FYVE-type zinc-finger fold. Residues 115-134 (LMRLKVKDLRQYLLLRNIPT) form the SAP 1 domain. Residue S169 is modified to Phosphoserine. The tract at residues 216 to 256 (IASANTDDDDDDDDDDDDDEDDDDEQEEEEQNPGLSKKKAR) is disordered. Acidic residues predominate over residues 221-246 (TDDDDDDDDDDDDDEDDDDEQEEEEQ). 2 positions are modified to phosphoserine: S258 and S260. Residues 268-282 (VEGMSVRQLKEILAR) form the SAP 2 domain. Residues 329–364 (CRICMDAVIDCVLLECGHMVTCTKCGKRMSECPICR) form an RING-type zinc finger.

In terms of assembly, interacts with CASP8 and CASP10. Interacts with p53/TP53; involved in p53/TP53 ubiquitination. Interacts (via RING-type zinc finger) with MDM2; the interaction stabilizes MDM2. Interacts (via RING-type zinc finger) with PPARGC1A. Interacts with NOD1. In terms of processing, autoubiquitinated (in vitro). Post-translationally, proteolytically cleaved by caspases upon induction of apoptosis by TNF.

The protein localises to the cell membrane. Its subcellular location is the endomembrane system. The protein resides in the nucleus. It is found in the nucleus speckle. It localises to the cytoplasm. The protein localises to the cytosol. It carries out the reaction S-ubiquitinyl-[E2 ubiquitin-conjugating enzyme]-L-cysteine + [acceptor protein]-L-lysine = [E2 ubiquitin-conjugating enzyme]-L-cysteine + N(6)-ubiquitinyl-[acceptor protein]-L-lysine.. Its pathway is protein modification; protein ubiquitination. E3 ubiquitin-protein ligase that regulates several biological processes through the ubiquitin-mediated proteasomal degradation of various target proteins. Ubiquitinates the caspases CASP8 and CASP10, promoting their proteasomal degradation, to negatively regulate cell death downstream of death domain receptors in the extrinsic pathway of apoptosis. May mediate 'Lys-48'-linked polyubiquitination of RIPK1 and its subsequent proteasomal degradation thereby indirectly regulating the tumor necrosis factor-mediated signaling pathway. Negatively regulates p53/TP53 through its direct ubiquitination and targeting to proteasomal degradation. Indirectly, may also negatively regulate p53/TP53 through ubiquitination and degradation of SFN. Mediates PPARGC1A proteasomal degradation probably through ubiquitination thereby indirectly regulating the metabolism of brown fat cells. Possibly involved in innate immunity, through 'Lys-48'-linked polyubiquitination of NOD1 and its subsequent proteasomal degradation. The chain is E3 ubiquitin-protein ligase RNF34 from Mus musculus (Mouse).